The primary structure comprises 38 residues: Large ribosomal subunit protein bL36 (38 aa).

It belongs to the bacterial ribosomal protein bL36 family.

The protein is Large ribosomal subunit protein bL36 of Proteus mirabilis (strain HI4320).